Here is a 348-residue protein sequence, read N- to C-terminus: Protein RecA (348 aa).

66–73 (GPESSGKT) is a binding site for ATP.

The protein belongs to the RecA family.

The protein resides in the cytoplasm. Functionally, can catalyze the hydrolysis of ATP in the presence of single-stranded DNA, the ATP-dependent uptake of single-stranded DNA by duplex DNA, and the ATP-dependent hybridization of homologous single-stranded DNAs. It interacts with LexA causing its activation and leading to its autocatalytic cleavage. This Burkholderia lata (strain ATCC 17760 / DSM 23089 / LMG 22485 / NCIMB 9086 / R18194 / 383) protein is Protein RecA.